A 261-amino-acid polypeptide reads, in one-letter code: Ribonuclease HII (261 aa).

An RNase H type-2 domain is found at 72–260; sequence AVICGIDEVG…IKSIVLEKLD (189 aa). D78, E79, and D170 together coordinate a divalent metal cation.

This sequence belongs to the RNase HII family. Mn(2+) is required as a cofactor. Mg(2+) serves as cofactor.

It localises to the cytoplasm. The catalysed reaction is Endonucleolytic cleavage to 5'-phosphomonoester.. In terms of biological role, endonuclease that specifically degrades the RNA of RNA-DNA hybrids. The chain is Ribonuclease HII from Staphylococcus carnosus (strain TM300).